The following is a 411-amino-acid chain: Serine hydroxymethyltransferase (411 aa).

(6S)-5,6,7,8-tetrahydrofolate is bound by residues L119 and 123–125 (GHL). K228 is subject to N6-(pyridoxal phosphate)lysine. (6S)-5,6,7,8-tetrahydrofolate is bound at residue 351 to 353 (SPF).

It belongs to the SHMT family. Homodimer. Pyridoxal 5'-phosphate is required as a cofactor.

Its subcellular location is the cytoplasm. It carries out the reaction (6R)-5,10-methylene-5,6,7,8-tetrahydrofolate + glycine + H2O = (6S)-5,6,7,8-tetrahydrofolate + L-serine. It functions in the pathway one-carbon metabolism; tetrahydrofolate interconversion. It participates in amino-acid biosynthesis; glycine biosynthesis; glycine from L-serine: step 1/1. Functionally, catalyzes the reversible interconversion of serine and glycine with tetrahydrofolate (THF) serving as the one-carbon carrier. This reaction serves as the major source of one-carbon groups required for the biosynthesis of purines, thymidylate, methionine, and other important biomolecules. Also exhibits THF-independent aldolase activity toward beta-hydroxyamino acids, producing glycine and aldehydes, via a retro-aldol mechanism. This is Serine hydroxymethyltransferase from Clostridium novyi (strain NT).